A 501-amino-acid polypeptide reads, in one-letter code: Acetylcholine receptor subunit beta (501 aa).

A signal peptide spans 1-23; it reads MTPGALLMLLGALGAPLAPGVRG. Residues 24-244 lie on the Extracellular side of the membrane; sequence SEAEGRLREK…VIFYLIIRRK (221 aa). Residues Cys-151 and Cys-165 are joined by a disulfide bond. Asn-164 carries an N-linked (GlcNAc...) asparagine glycan. The next 3 helical transmembrane spans lie at 245-269, 277-295, and 311-332; these read PLFY…VFYL, MGLS…LLLA, and YLMF…VLNL. Topologically, residues 333–469 are cytoplasmic; sequence HHRSPHTHQM…WQFVAMVVDR (137 aa). Tyr-390 is modified (phosphotyrosine; by Tyr-kinases). Residues 470–488 traverse the membrane as a helical segment; that stretch reads LFLWTFIIFTSVGTLVIFL.

It belongs to the ligand-gated ion channel (TC 1.A.9) family. Acetylcholine receptor (TC 1.A.9.1) subfamily. Beta-1/CHRNB1 sub-subfamily. Pentamer of two alpha chains, and one each of the beta, delta, and gamma (in immature muscle) or epsilon (in mature muscle) chains. The muscle heteropentamer composed of alpha-1, beta-1, delta, epsilon subunits interacts with the alpha-conotoxin ImII.

The protein localises to the postsynaptic cell membrane. It localises to the cell membrane. It catalyses the reaction K(+)(in) = K(+)(out). The enzyme catalyses Na(+)(in) = Na(+)(out). After binding acetylcholine, the AChR responds by an extensive change in conformation that affects all subunits and leads to opening of an ion-conducting channel across the plasma membrane. The sequence is that of Acetylcholine receptor subunit beta from Homo sapiens (Human).